The following is a 250-amino-acid chain: Vitamin B12 import ATP-binding protein BtuD (250 aa).

Positions 3–233 (LRQASVLPRL…EVLSPVFGVA (231 aa)) constitute an ABC transporter domain. 29 to 36 (GPNGAGKS) provides a ligand contact to ATP.

Belongs to the ABC transporter superfamily. Vitamin B12 importer (TC 3.A.1.13.1) family. As to quaternary structure, the complex is composed of two ATP-binding proteins (BtuD), two transmembrane proteins (BtuC) and a solute-binding protein (BtuF).

The protein localises to the cell inner membrane. It carries out the reaction an R-cob(III)alamin(out) + ATP + H2O = an R-cob(III)alamin(in) + ADP + phosphate + H(+). Its function is as follows. Part of the ABC transporter complex BtuCDF involved in vitamin B12 import. Responsible for energy coupling to the transport system. This Pectobacterium atrosepticum (strain SCRI 1043 / ATCC BAA-672) (Erwinia carotovora subsp. atroseptica) protein is Vitamin B12 import ATP-binding protein BtuD.